The sequence spans 439 residues: Glutamine synthetase (439 aa).

The region spanning 12–93 (SKIKFVQLVF…VYGFIYKDNK (82 aa)) is the GS beta-grasp domain. A GS catalytic domain is found at 99–439 (PRGILKRALE…EWELERYFFL (341 aa)). Mg(2+) is bound by residues glutamate 122 and glutamate 124. Glutamate 172 is an ATP binding site. Mg(2+) contacts are provided by glutamate 177 and glutamate 184. Position 229 (glycine 229) interacts with L-glutamate. Residue histidine 233 coordinates Mg(2+). Residues 235 to 237 (HIS) and serine 237 each bind ATP. Residues arginine 283, glutamate 289, and arginine 301 each coordinate L-glutamate. Residues arginine 301, arginine 306, and lysine 313 each contribute to the ATP site. Mg(2+) is bound at residue glutamate 318. Arginine 320 lines the L-glutamate pocket.

This sequence belongs to the glutamine synthetase family. As to quaternary structure, oligomer of 12 subunits arranged in the form of two hexagons. Mg(2+) serves as cofactor.

It is found in the cytoplasm. The enzyme catalyses L-glutamate + NH4(+) + ATP = L-glutamine + ADP + phosphate + H(+). Its function is as follows. Probably involved in nitrogen metabolism via ammonium assimilation. Catalyzes the ATP-dependent biosynthesis of glutamine from glutamate and ammonia. The sequence is that of Glutamine synthetase from Pyrococcus furiosus (strain ATCC 43587 / DSM 3638 / JCM 8422 / Vc1).